Reading from the N-terminus, the 865-residue chain is Leucine-rich repeat-containing protein 66 (865 aa).

A helical transmembrane segment spans residues 4 to 24; sequence FYARVTVMVTGLCFVGTVTNP. N-linked (GlcNAc...) asparagine glycosylation occurs at N42. LRR repeat units lie at residues 138 to 160, 161 to 182, 185 to 206, 209 to 230, and 235 to 255; these read RLKV…WKLK, PLCS…GFHG, QLKS…AFKG, KLQV…VTIA, and NLEL…ANFQ. N248 carries N-linked (GlcNAc...) asparagine glycosylation. Residues 366-386 traverse the membrane as a helical segment; the sequence is ALAVCLSVFITFVVAFCLGAF. Disordered stretches follow at residues 463-522 and 654-749; these read RMLG…PGQH and DTPS…AESV. The segment covering 470-479 has biased composition (polar residues); the sequence is MDPSSQQSPG. The segment covering 675–688 has biased composition (basic and acidic residues); that stretch reads AVQRDASFDPHDDL. Positions 702–713 are enriched in polar residues; sequence FTLSSEGSQDTR. S714 and S748 each carry phosphoserine. One can recognise an LRRNT domain in the interval 728–759; the sequence is SQPLPSRNLGEYKDSVTSAESVEDITSQQTLE. Residue N787 is glycosylated (N-linked (GlcNAc...) asparagine). The interval 840–865 is disordered; sequence FPNIDSSPSPPCSDQDPSDPEEHDTK. Over residues 855–865 the composition is skewed to acidic residues; sequence DPSDPEEHDTK.

It localises to the membrane. The sequence is that of Leucine-rich repeat-containing protein 66 (Lrrc66) from Rattus norvegicus (Rat).